Reading from the N-terminus, the 385-residue chain is ELAV-like protein 4 (385 aa).

The interval 12-48 is disordered; it reads TMEPQVSNGPTSNTSNGPSSNNRNCPSPMQTGAATDD. Residues 18–33 show a composition bias toward low complexity; sequence SNGPTSNTSNGPSSNN. Over residues 34 to 44 the composition is skewed to polar residues; that stretch reads RNCPSPMQTGA. At Ser-38 the chain carries Phosphoserine. 2 RRM domains span residues 51–129 and 137–217; these read TNLI…YARP and ANLY…FANN. Ser-233 is modified (phosphoserine). Residue Arg-248 is modified to Asymmetric dimethylarginine; by CARM1; alternate. The residue at position 248 (Arg-248) is an Omega-N-methylarginine; by CARM1; alternate. The RRM 3 domain occupies 302 to 380; it reads WCIFVYNLSP…RVLQVSFKTN (79 aa).

This sequence belongs to the RRM elav family. In terms of assembly, component of a TAU mRNP complex, at least composed of IGF2BP1, ELAVL4 and G3BP. Associates with the EIF4F cap-binding complex, composed of EIF4G, EIF4A, EIF4E and PABP. Within the EIF4F cap-binding complex, interacts with EIF4A. Interacts with SMN (via Tudor domain) in an RNA-independent manner; the interaction is required for localization of ELAVL4 to RNA granules. Interacts with MAP1 light chain LC1 (via C-terminus); the interaction contributes to the association of ELAVL4 with microtubules. Interacts with MAP1 light chain LC2. Post-translationally, methylated by CARM1, which leads to reduced RNA-binding activity and enhanced interaction with SMN. Methylation at Arg-248 by CARM1 weakens protective binding to the 3'UTR of CDKN1A mRNA and down-regulates CDKN1A protein expression, thereby maintaining cells in a proliferative state. Methylation is inhibited by NGF, which facilitates neurite outgrowth. As to expression, expressed in the brain, including the hippocampus, and in pancreatic beta cells (at protein level). Expressed in pyramidal neurons of the hippocampal CA3 and CA1 region and in the hilus but not in dentate granule cells (at protein level). Expressed in the dorsal root ganglion and the spinal cord (at protein level). Expressed in neural stem and progenitor cells (at protein level). Expressed in radial glia-like cells and in transient amplifying cells in the subventricular zone (SVZ), and in immature neurons both in the SVZ and the rostral migratory stream as well as in mature neurons in the olfactory bulb (at protein level). Expressed in testis and in the brain, including the hippocampus, the neocortex and the cerebellum. Expressed in lower- but not upper-layer primary neurons of the mature neocortex, in the hippocampal regions CA1-3 and the dentate gyrus. Expressed in the mitral and granule cells of the olfactory bulb, cerebral cortex, entorhinal cortex, thalamus, medial habenula, amygdala, granule cells of the cerebellum, pons, olivary nucleus, dorsal and ventral spinal cord and in dorsal root ganglia. Expressed in motor neurons. Isoform 4: Expressed in the brain. Isoform 5: Expressed in the brain. Isoform 6: Expressed in the brain. Isoform 7: Expressed in the brain. Isoform 8: Expressed in the brain. Isoform 9: Expressed in the brain. Isoform 10: Expressed in the brain. Isoform 11: Expressed in the brain.

Its subcellular location is the cytoplasm. It is found in the perikaryon. It localises to the cell projection. The protein localises to the dendrite. The protein resides in the axon. Its subcellular location is the growth cone. In terms of biological role, RNA-binding protein that is involved in the post-transcriptional regulation of mRNAs. Plays a role in the regulation of mRNA stability, alternative splicing and translation. Binds to AU-rich element (ARE) sequences in the 3' untranslated region (3'UTR) of target mRNAs, including GAP43, VEGF, FOS, CDKN1A and ACHE mRNA. Many of the target mRNAs are coding for RNA-binding proteins, transcription factors and proteins involved in RNA processing and/or neuronal development and function. By binding to the mRNA 3'UTR, decreases mRNA deadenylation and thereby contributes to the stabilization of mRNA molecules and their protection from decay. Also binds to the polyadenylated (poly(A)) tail in the 3'UTR of mRNA, thereby increasing its affinity for mRNA binding. Mainly plays a role in neuron-specific RNA processing by stabilization of mRNAs such as GAP43, ACHE and mRNAs of other neuronal proteins, thereby contributing to the differentiation of neural progenitor cells, nervous system development, learning and memory mechanisms. Involved in the negative regulation of the proliferative activity of neuronal stem cells and in the positive regulation of neuronal differentiation of neural progenitor cells. Promotes neuronal differentiation of neural stem/progenitor cells in the adult subventricular zone of the hippocampus by binding to and stabilizing SATB1 mRNA. Binds and stabilizes MSI1 mRNA in neural stem cells. Exhibits increased binding to ACHE mRNA during neuronal differentiation, thereby stabilizing ACHE mRNA and enhancing its expression. Protects CDKN1A mRNA from decay by binding to its 3'-UTR. May bind to APP and BACE1 mRNAS and the BACE1AS lncRNA and enhance their stabilization. Plays a role in neurite outgrowth and in the establishment and maturation of dendritic arbors, thereby contributing to neocortical and hippocampal circuitry function. Stabilizes GAP43 mRNA and protects it from decay during postembryonic development in the brain. By promoting the stabilization of GAP43 mRNA, plays a role in NGF-mediated neurite outgrowth. Binds to BDNF long 3'UTR mRNA, thereby leading to its stabilization and increased dendritic translation after activation of PKC. By increasing translation of BDNF after nerve injury, may contribute to nerve regeneration. Acts as a stabilizing factor by binding to the 3'UTR of NOVA1 mRNA, thereby increasing its translation and enhancing its functional activity in neuron-specific splicing. Stimulates translation of mRNA in a poly(A)- and cap-dependent manner, possibly by associating with the EIF4F cap-binding complex. May also negatively regulate translation by binding to the 5'UTR of Ins2 mRNA, thereby repressing its translation. Upon glucose stimulation, Ins2 mRNA is released from ELAVL4 and translational inhibition is abolished. Also plays a role in the regulation of alternative splicing. May regulate alternative splicing of CALCA pre-mRNA into Calcitonin and Calcitonin gene-related peptide 1 (CGRP) by competing with splicing regulator TIAR for binding to U-rich sequences of CALCA pre-mRNA. The chain is ELAV-like protein 4 (Elavl4) from Mus musculus (Mouse).